Reading from the N-terminus, the 259-residue chain is UPF0246 protein MADE_1015435 (259 aa).

This sequence belongs to the UPF0246 family.

This chain is UPF0246 protein MADE_1015435, found in Alteromonas mediterranea (strain DSM 17117 / CIP 110805 / LMG 28347 / Deep ecotype).